The following is a 345-amino-acid chain: Putative [LysW]-L-2-aminoadipate/[LysW]-L-glutamate phosphate reductase (345 aa).

Residue 11–14 (SGFT) coordinates NADP(+). A disordered region spans residues 34–56 (TSRSKENKTIGHSHPNLRHSDLR). Cysteine 146 is a catalytic residue. An NADP(+)-binding site is contributed by asparagine 309.

The protein belongs to the NAGSA dehydrogenase family. Type 1 subfamily. LysY sub-subfamily.

It is found in the cytoplasm. It carries out the reaction [amino-group carrier protein]-C-terminal-N-(1-carboxy-5-oxopentan-1-yl)-L-glutamine + phosphate + NADP(+) = [amino-group carrier protein]-C-terminal-N-(1-carboxy-5-phosphooxy-5-oxopentan-1-yl)-L-glutamine + NADPH + H(+). The catalysed reaction is [amino-group carrier protein]-C-terminal-gamma-(L-glutamyl-5-semialdehyde)-L-glutamate + phosphate + NADP(+) = [amino-group carrier protein]-C-terminal-gamma-(5-phospho-L-glutamyl)-L-glutamate + NADPH + H(+). The protein operates within amino-acid biosynthesis; L-lysine biosynthesis via AAA pathway; L-lysine from L-alpha-aminoadipate (Thermus route): step 3/5. It functions in the pathway amino-acid biosynthesis; L-arginine biosynthesis. In terms of biological role, involved in both the arginine and lysine biosynthetic pathways. This is Putative [LysW]-L-2-aminoadipate/[LysW]-L-glutamate phosphate reductase from Haloarcula marismortui (strain ATCC 43049 / DSM 3752 / JCM 8966 / VKM B-1809) (Halobacterium marismortui).